The sequence spans 110 residues: PTS system oligo-beta-mannoside-specific EIIA component (110 aa).

A PTS EIIA type-3 domain is found at 9–107 (LTDEQISFQL…VKEMLDLFKT (99 aa)). H83 acts as the Tele-phosphohistidine intermediate in catalysis. H83 is modified (phosphohistidine; by HPr).

It localises to the cytoplasm. Functionally, the phosphoenolpyruvate-dependent sugar phosphotransferase system (sugar PTS), a major carbohydrate active transport system, catalyzes the phosphorylation of incoming sugar substrates concomitantly with their translocation across the cell membrane. The enzyme II GmuABC PTS system is involved in the transport of oligo-glucomannans such as cellobiose or mannobiose. This Bacillus subtilis (strain 168) protein is PTS system oligo-beta-mannoside-specific EIIA component.